An 81-amino-acid chain; its full sequence is uncharacterized protein (81 aa).

The next 2 membrane-spanning stretches (helical) occupy residues 1-21 (MTLF…FSLL) and 27-47 (IFIY…HHFF).

Its subcellular location is the membrane. This is an uncharacterized protein from Saccharomyces cerevisiae (strain ATCC 204508 / S288c) (Baker's yeast).